The sequence spans 486 residues: Ribosomal protein uS12 methylthiotransferase RimO (486 aa).

Residues 9–125 (RSVALVTLGC…LSSHLEAILH (117 aa)) enclose the MTTase N-terminal domain. [4Fe-4S] cluster contacts are provided by cysteine 18, cysteine 54, cysteine 88, cysteine 191, cysteine 195, and cysteine 198. Residues 177 to 408 (LGSGPWAPVK…RLVEELVTQR (232 aa)) form the Radical SAM core domain. Residues 410–482 (EERLGEVVEV…GADLLAEPLV (73 aa)) form the TRAM domain.

This sequence belongs to the methylthiotransferase family. RimO subfamily. [4Fe-4S] cluster serves as cofactor.

It localises to the cytoplasm. It catalyses the reaction L-aspartate(89)-[ribosomal protein uS12]-hydrogen + (sulfur carrier)-SH + AH2 + 2 S-adenosyl-L-methionine = 3-methylsulfanyl-L-aspartate(89)-[ribosomal protein uS12]-hydrogen + (sulfur carrier)-H + 5'-deoxyadenosine + L-methionine + A + S-adenosyl-L-homocysteine + 2 H(+). Catalyzes the methylthiolation of an aspartic acid residue of ribosomal protein uS12. The sequence is that of Ribosomal protein uS12 methylthiotransferase RimO from Kineococcus radiotolerans (strain ATCC BAA-149 / DSM 14245 / SRS30216).